We begin with the raw amino-acid sequence, 187 residues long: MTNEFEILKPGKLLLASANLLDPNFKRTVLLMCEHNEEGSIGFILNKPMEFKVCEAISGFDEIDEPLHMGGPVQVDTVHVLHTRGDVIDGAVEVIPGLFWGGDKEQLSYLINTGVIKASEVRFFLGYAGWSAGQLEAEFEEGSWYTADASSEQVFTDEYERMWSRSVRSKGGEYCYVANSPELPGMN.

Belongs to the UPF0301 (AlgH) family.

The protein is UPF0301 protein CT0663 of Chlorobaculum tepidum (strain ATCC 49652 / DSM 12025 / NBRC 103806 / TLS) (Chlorobium tepidum).